A 607-amino-acid polypeptide reads, in one-letter code: UvrABC system protein C (607 aa).

Positions 16 to 94 (GRPGVYRMFD…IKEWRPPYNI (79 aa)) constitute a GIY-YIG domain. Residues 203 to 238 (NALTDELSAGMEQAASTLDFEKAAELRDQISLLRRV) enclose the UVR domain.

This sequence belongs to the UvrC family. As to quaternary structure, interacts with UvrB in an incision complex.

The protein localises to the cytoplasm. In terms of biological role, the UvrABC repair system catalyzes the recognition and processing of DNA lesions. UvrC both incises the 5' and 3' sides of the lesion. The N-terminal half is responsible for the 3' incision and the C-terminal half is responsible for the 5' incision. The polypeptide is UvrABC system protein C (Pseudomonas protegens (strain DSM 19095 / LMG 27888 / CFBP 6595 / CHA0)).